The primary structure comprises 78 residues: Large ribosomal subunit protein uL29 (78 aa).

It belongs to the universal ribosomal protein uL29 family.

This Rippkaea orientalis (strain PCC 8801 / RF-1) (Cyanothece sp. (strain PCC 8801)) protein is Large ribosomal subunit protein uL29.